The following is a 258-amino-acid chain: Zinc import ATP-binding protein ZnuC (258 aa).

Residues 7-233 (ITAKNINHAY…PAFQELFGQG (227 aa)) form the ABC transporter domain. Residue 39 to 46 (GPNGAGKS) participates in ATP binding.

The protein belongs to the ABC transporter superfamily. Zinc importer (TC 3.A.1.15.5) family. As to quaternary structure, the complex is composed of two ATP-binding proteins (ZnuC), two transmembrane proteins (ZnuB) and a solute-binding protein (ZnuA).

Its subcellular location is the cell inner membrane. The catalysed reaction is Zn(2+)(out) + ATP(in) + H2O(in) = Zn(2+)(in) + ADP(in) + phosphate(in) + H(+)(in). Its function is as follows. Part of the ABC transporter complex ZnuABC involved in zinc import. Responsible for energy coupling to the transport system. The protein is Zinc import ATP-binding protein ZnuC of Hydrogenovibrio crunogenus (strain DSM 25203 / XCL-2) (Thiomicrospira crunogena).